We begin with the raw amino-acid sequence, 457 residues long: Nuclear distribution protein PAC1 (457 aa).

The stretch at 73–106 forms a coiled coil; the sequence is SSIVRLQRRIIELEKEIQELTDENENLRENGPSS. 7 WD repeats span residues 126–165, 169–211, 216–257, 260–299, 322–362, 382–419, and 423–457; these read SAGA…MPVA, AHMR…LQLI, GHEH…CLKS, PHTE…SFGT, SHRF…FVAH, GHSS…VVRS, and LHSG…ILMK.

The protein belongs to the WD repeat LIS1/nudF family. As to quaternary structure, self-associates. Interacts with NDL1 and dynein.

Its subcellular location is the cytoplasm. The protein resides in the cytoskeleton. It is found in the spindle pole. In terms of biological role, positively regulates the activity of the minus-end directed microtubule motor protein dynein. Plays a central role in positioning the mitotic spindle at the bud neck during cell division. Targets cytoplasmic dynein to microtubule plus ends, thereby promoting dynein-mediated microtubule sliding along the bud cortex and consequently the movement of the mitotic spindle to the bud neck. The protein is Nuclear distribution protein PAC1 of Lachancea thermotolerans (strain ATCC 56472 / CBS 6340 / NRRL Y-8284) (Yeast).